The following is a 545-amino-acid chain: Intercellular adhesion molecule 1 (545 aa).

Residues 1-27 form the signal peptide; sequence MASTRARPMLPLLLVLVAVVIPGPVGA. The Extracellular portion of the chain corresponds to 28–492; that stretch reads QVSIHPTEAF…HLTVLYHDQN (465 aa). Ig-like C2-type domains lie at 41 to 103 and 128 to 193; these read GGSV…QSSA and GKNL…LDLR. N-linked (GlcNAc...) asparagine glycosylation occurs at Asn-47. Disulfide bonds link Cys-48–Cys-92, Cys-52–Cys-96, and Cys-135–Cys-186. N-linked (GlcNAc...) asparagine glycosylation is present at Asn-154. Residues 177–179 carry the Cell attachment site motif; the sequence is RGD. N-linked (GlcNAc...) asparagine glycosylation is found at Asn-183 and Asn-202. Residues 230-297 form the Ig-like C2-type 3 domain; the sequence is GTQQKFLCSL…LRCVLELADQ (68 aa). A disulfide bond links Cys-237 and Cys-290. 6 N-linked (GlcNAc...) asparagine glycosylation sites follow: Asn-309, Asn-344, Asn-396, Asn-417, Asn-439, and Asn-464. In terms of domain architecture, Ig-like C2-type 4 spans 325 to 389; the sequence is GDQVTVKCEA…FFCSAALEVD (65 aa). An intrachain disulfide couples Cys-332 to Cys-382. Residues 343–365 form a disordered region; the sequence is LNSTSPRPPTSQGTSPRPPTSQI. 3 disulfides stabilise this stretch: Cys-414/Cys-430, Cys-430/Cys-469, and Cys-442/Cys-469. One can recognise an Ig-like C2-type 5 domain in the interval 423 to 476; the sequence is GSQQTLTCQPQGNPAPNLTCSRKADGVPLPIGMVKSVKREMNGTYKCRAFSSRG. The helical transmembrane segment at 493-517 threads the bilayer; sequence TWVIIVGVLVLIIAGFVIVASIYTY. The Cytoplasmic segment spans residues 518–545; the sequence is YRQRKIRIYKLQKAQEEALKLKVQAPPP.

This sequence belongs to the immunoglobulin superfamily. ICAM family. In terms of assembly, homodimer. Interacts with MUC1 and promotes cell aggregation in epithelial cells. Interacts with ARHGEF26/SGEF. Interacts (on T cell side) with CD81, CD247 and CD9 at immunological synapses between antigen-presenting cells and T cells. Monoubiquitinated, which is promoted by MARCH9 and leads to endocytosis.

The protein localises to the membrane. ICAM proteins are ligands for the leukocyte adhesion protein LFA-1 (integrin alpha-L/beta-2). During leukocyte trans-endothelial migration, ICAM1 engagement promotes the assembly of endothelial apical cups through ARHGEF26/SGEF and RHOG activation. This chain is Intercellular adhesion molecule 1 (Icam1), found in Rattus norvegicus (Rat).